The sequence spans 770 residues: DNA ligase 1 (770 aa).

Over residues 1–18 (MSTGEGTAEQTATGTPAQ) the composition is skewed to low complexity. The tract at residues 1–27 (MSTGEGTAEQTATGTPAQNGRESIPSD) is disordered. Residues 57 to 61 (DAEFD), 106 to 107 (SL), and glutamate 142 each bind NAD(+). The N6-AMP-lysine intermediate role is filled by lysine 144. Residues arginine 165, glutamate 202, lysine 318, and lysine 342 each contribute to the NAD(+) site. Cysteine 439, cysteine 442, cysteine 458, and cysteine 464 together coordinate Zn(2+). Positions 657-746 (STPRTLEGLT…PAAVGDAAEA (90 aa)) constitute a BRCT domain. The disordered stretch occupies residues 741 to 770 (GDAAEADGGDAPEESAALQEEKAAAVEETA). Positions 744–753 (AEADGGDAPE) are enriched in acidic residues. A compositionally biased stretch (basic and acidic residues) spans 759 to 770 (QEEKAAAVEETA).

Belongs to the NAD-dependent DNA ligase family. LigA subfamily. Requires Mg(2+) as cofactor. The cofactor is Mn(2+).

It catalyses the reaction NAD(+) + (deoxyribonucleotide)n-3'-hydroxyl + 5'-phospho-(deoxyribonucleotide)m = (deoxyribonucleotide)n+m + AMP + beta-nicotinamide D-nucleotide.. DNA ligase that catalyzes the formation of phosphodiester linkages between 5'-phosphoryl and 3'-hydroxyl groups in double-stranded DNA using NAD as a coenzyme and as the energy source for the reaction. It is essential for DNA replication and repair of damaged DNA. The chain is DNA ligase 1 from Pseudarthrobacter chlorophenolicus (strain ATCC 700700 / DSM 12829 / CIP 107037 / JCM 12360 / KCTC 9906 / NCIMB 13794 / A6) (Arthrobacter chlorophenolicus).